A 250-amino-acid polypeptide reads, in one-letter code: Cobalt transport protein CbiM (250 aa).

The signal sequence occupies residues 1-27 (MKKPLFFIASACVTIYILFALSPSVYA). 6 helical membrane passes run 33–53 (GFLPWQWALVWWLLFLPFFLV), 70–90 (LLLALATAFTFVLSALKIPSV), 102–122 (LGALLFGPFVMTVIGTAVLLF), 134–154 (TLGANAFSMAVVGPLVAYVLF), 168–188 (VFLAAMMADLATYVMTSIQLA), and 208–228 (IFAVTQIPLAITEGLLTVVVW).

This sequence belongs to the CbiM family. As to quaternary structure, forms an energy-coupling factor (ECF) transporter complex composed of an ATP-binding protein (A component, CbiO), a transmembrane protein (T component, CbiQ) and 2 possible substrate-capture proteins (S components, CbiM and CbiN) of unknown stoichimetry.

It is found in the cell membrane. Its pathway is cofactor biosynthesis; adenosylcobalamin biosynthesis. Functionally, part of the energy-coupling factor (ECF) transporter complex CbiMNOQ involved in cobalt import. This is Cobalt transport protein CbiM from Anoxybacillus flavithermus (strain DSM 21510 / WK1).